The sequence spans 243 residues: Pyridoxine 5'-phosphate synthase (243 aa).

Asparagine 9 contributes to the 3-amino-2-oxopropyl phosphate binding site. 11–12 (DH) contributes to the 1-deoxy-D-xylulose 5-phosphate binding site. Residue arginine 20 coordinates 3-amino-2-oxopropyl phosphate. Residue histidine 45 is the Proton acceptor of the active site. Residues arginine 47 and histidine 52 each coordinate 1-deoxy-D-xylulose 5-phosphate. The active-site Proton acceptor is the glutamate 72. Position 102 (threonine 102) interacts with 1-deoxy-D-xylulose 5-phosphate. The Proton donor role is filled by histidine 193. 3-amino-2-oxopropyl phosphate-binding positions include glycine 194 and 215 to 216 (GH).

It belongs to the PNP synthase family. As to quaternary structure, homooctamer; tetramer of dimers.

The protein resides in the cytoplasm. The enzyme catalyses 3-amino-2-oxopropyl phosphate + 1-deoxy-D-xylulose 5-phosphate = pyridoxine 5'-phosphate + phosphate + 2 H2O + H(+). The protein operates within cofactor biosynthesis; pyridoxine 5'-phosphate biosynthesis; pyridoxine 5'-phosphate from D-erythrose 4-phosphate: step 5/5. Functionally, catalyzes the complicated ring closure reaction between the two acyclic compounds 1-deoxy-D-xylulose-5-phosphate (DXP) and 3-amino-2-oxopropyl phosphate (1-amino-acetone-3-phosphate or AAP) to form pyridoxine 5'-phosphate (PNP) and inorganic phosphate. In Yersinia pestis, this protein is Pyridoxine 5'-phosphate synthase.